The primary structure comprises 90 residues: Protein LURE 1.5 (90 aa).

The first 19 residues, 1-19 (MKLPIIFLTLLIFVSSCTS), serve as a signal peptide directing secretion. 2 disulfides stabilise this stretch: Cys58–Cys75 and Cys61–Cys82.

The protein belongs to the DEFL family. As to expression, expressed in the pistil. Detected exclusively in the synergid cells.

The protein resides in the secreted. Inactive pollen tube attractants guiding pollen tubes to the ovular micropyle. This chain is Protein LURE 1.5, found in Arabidopsis thaliana (Mouse-ear cress).